The chain runs to 120 residues: NAD(P)H-quinone oxidoreductase subunit 3, chloroplastic (120 aa).

Helical transmembrane passes span 9-29 (IFWA…FVSG), 64-84 (MFAL…PWAM), and 88-108 (VLGI…IVGL).

It belongs to the complex I subunit 3 family. NDH is composed of at least 16 different subunits, 5 of which are encoded in the nucleus.

The protein localises to the plastid. Its subcellular location is the chloroplast thylakoid membrane. It catalyses the reaction a plastoquinone + NADH + (n+1) H(+)(in) = a plastoquinol + NAD(+) + n H(+)(out). It carries out the reaction a plastoquinone + NADPH + (n+1) H(+)(in) = a plastoquinol + NADP(+) + n H(+)(out). In terms of biological role, NDH shuttles electrons from NAD(P)H:plastoquinone, via FMN and iron-sulfur (Fe-S) centers, to quinones in the photosynthetic chain and possibly in a chloroplast respiratory chain. The immediate electron acceptor for the enzyme in this species is believed to be plastoquinone. Couples the redox reaction to proton translocation, and thus conserves the redox energy in a proton gradient. The polypeptide is NAD(P)H-quinone oxidoreductase subunit 3, chloroplastic (Daucus carota (Wild carrot)).